The primary structure comprises 201 residues: Holliday junction resolvase RecU (201 aa).

Residues Thr-87, Asp-89, Glu-102, and Gln-121 each coordinate Mg(2+).

Belongs to the RecU family. Requires Mg(2+) as cofactor.

The protein resides in the cytoplasm. It carries out the reaction Endonucleolytic cleavage at a junction such as a reciprocal single-stranded crossover between two homologous DNA duplexes (Holliday junction).. Its function is as follows. Endonuclease that resolves Holliday junction intermediates in genetic recombination. Cleaves mobile four-strand junctions by introducing symmetrical nicks in paired strands. Promotes annealing of linear ssDNA with homologous dsDNA. Required for DNA repair, homologous recombination and chromosome segregation. The protein is Holliday junction resolvase RecU of Listeria welshimeri serovar 6b (strain ATCC 35897 / DSM 20650 / CCUG 15529 / CIP 8149 / NCTC 11857 / SLCC 5334 / V8).